We begin with the raw amino-acid sequence, 211 residues long: MDETLKDLAAHVTGALPGAVVAHKIAYGELTLETTPDHILKLATFLRDDPSCLFTCIVDVCGADYPAREQRFEVVYHLLSLKQNARVRVKLSAGEETLVPSVTGIWPGANWFEREAYDLYGILFTGHPELRRLLTDYGFDGHPLRKDFPLTGFVEVRYDDELKRVVYEPVRLAQEFRNFDFLSPWEGVEYILPGDEKASSQPGAPAAPKAS.

It belongs to the complex I 30 kDa subunit family. In terms of assembly, NDH-1 is composed of 14 different subunits. Subunits NuoB, C, D, E, F, and G constitute the peripheral sector of the complex.

It localises to the cell inner membrane. The catalysed reaction is a quinone + NADH + 5 H(+)(in) = a quinol + NAD(+) + 4 H(+)(out). Its function is as follows. NDH-1 shuttles electrons from NADH, via FMN and iron-sulfur (Fe-S) centers, to quinones in the respiratory chain. The immediate electron acceptor for the enzyme in this species is believed to be ubiquinone. Couples the redox reaction to proton translocation (for every two electrons transferred, four hydrogen ions are translocated across the cytoplasmic membrane), and thus conserves the redox energy in a proton gradient. The polypeptide is NADH-quinone oxidoreductase subunit C (Azorhizobium caulinodans (strain ATCC 43989 / DSM 5975 / JCM 20966 / LMG 6465 / NBRC 14845 / NCIMB 13405 / ORS 571)).